The sequence spans 389 residues: Phenylpropanoylacetyl-CoA synthase (389 aa).

Residue cysteine 163 is part of the active site.

It belongs to the thiolase-like superfamily. Chalcone/stilbene synthases family. Homodimer. As to expression, expressed in both the leaf and rhizome, with higher expression in the rhizome.

The enzyme catalyses (E)-feruloyl-CoA + malonyl-CoA + H(+) = (E)-feruloylacetyl-CoA + CO2 + CoA. It carries out the reaction 4-coumaroyl-CoA + malonyl-CoA + H(+) = (4-coumaroyl)acetyl-CoA + CO2 + CoA. Its pathway is secondary metabolite biosynthesis; flavonoid biosynthesis. Its function is as follows. Catalyzes the formation of feruloyldiketide-CoA by condensing feruloyl-CoA and malonyl-CoA in the curcuminoid biosynthesis. Has no activity with cinnamoyl-CoA. The chain is Phenylpropanoylacetyl-CoA synthase (DCS) from Curcuma longa (Turmeric).